The following is a 161-amino-acid chain: TRAF-interacting protein with FHA domain-containing protein B (161 aa).

One can recognise an FHA domain in the interval Leu36–Leu91.

Interacts with TIFA.

In terms of biological role, inhibits TIFA-mediated TRAF6 activation possibly by inducing a conformational change in TIFA. This Homo sapiens (Human) protein is TRAF-interacting protein with FHA domain-containing protein B.